Here is a 421-residue protein sequence, read N- to C-terminus: E3 ubiquitin-protein ligase RMD5 (421 aa).

The CTLH domain occupies 176–236 (EFIEMGQIVH…QIVKHGNPVE (61 aa)). The RING-Gid-type zinc-finger motif lies at 361 to 404 (CPVLKEETTTENPPYSLACHHIISKKALDRLSKNGTITFKCPYC).

The protein belongs to the RMD5/GID2 family. Identified in the GID/CTLH complex. In the absence of stress, the complex exists as an inactive anticipatory complex (GID(Ant)), composed of VID30/GID1, the E3 ubiquitin-ligase RMD5/GID2, VID28/GID5, GID8, and the RING-like subunit FYV10/GID9, awaiting a substrate receptor to form the active E3 ligase complex. When cells are shifted to glucose-containing medium, the substrate receptor VID24/GID4 is induced and becomes part of the complex, named GID(SR4). Additionally, GID7 transforms the GID(SR4) E3 ligase core into a higher-order supramolecular assembly (Chelator-GID(SR4)) specifically tailored for FBP1 ubiquitination. Under osmotic or heat stress, the substrate receptor GID10 is induced and becomes part of the complex, named GID(SR10). Within the GID complex, interacts directly with GID8, FYV10/GID9 and VID28/GID5.

The protein localises to the cytoplasm. The catalysed reaction is S-ubiquitinyl-[E2 ubiquitin-conjugating enzyme]-L-cysteine + [acceptor protein]-L-lysine = [E2 ubiquitin-conjugating enzyme]-L-cysteine + N(6)-ubiquitinyl-[acceptor protein]-L-lysine.. Its pathway is protein modification; protein ubiquitination. E3 ubiquitin-protein ligase component of the GID E3 ligase complex recruiting N termini and catalyzing ubiquitination of proteins targeted for degradation. GID E3 is regulated through assembly with interchangeable N-degron-binding substrate receptors induced by distinct environmental perturbations. Required for the adaptation to the presence of glucose in the growth medium; mediates in association with the substrate receptor VID24/GID4 the degradation of enzymes involved in gluconeogenesis when cells are shifted to glucose-containing medium. Required for proteasome-dependent catabolite degradation of fructose-1,6-bisphosphatase (FBP1), malate dehydrogenase (MDH2), and other gluconeogenic enzymes. In Saccharomyces cerevisiae (strain ATCC 204508 / S288c) (Baker's yeast), this protein is E3 ubiquitin-protein ligase RMD5.